Consider the following 187-residue polypeptide: Peptidyl-tRNA hydrolase (187 aa).

Residue Tyr14 participates in tRNA binding. His19 functions as the Proton acceptor in the catalytic mechanism. TRNA contacts are provided by Phe60 and Asn62.

Belongs to the PTH family. As to quaternary structure, monomer.

The protein localises to the cytoplasm. The enzyme catalyses an N-acyl-L-alpha-aminoacyl-tRNA + H2O = an N-acyl-L-amino acid + a tRNA + H(+). Hydrolyzes ribosome-free peptidyl-tRNAs (with 1 or more amino acids incorporated), which drop off the ribosome during protein synthesis, or as a result of ribosome stalling. Functionally, catalyzes the release of premature peptidyl moieties from peptidyl-tRNA molecules trapped in stalled 50S ribosomal subunits, and thus maintains levels of free tRNAs and 50S ribosomes. This Pseudothermotoga lettingae (strain ATCC BAA-301 / DSM 14385 / NBRC 107922 / TMO) (Thermotoga lettingae) protein is Peptidyl-tRNA hydrolase.